Consider the following 365-residue polypeptide: Putative agmatine deiminase (365 aa).

Cys357 (amidino-cysteine intermediate) is an active-site residue.

This sequence belongs to the agmatine deiminase family.

The catalysed reaction is agmatine + H2O = N-carbamoylputrescine + NH4(+). In Yersinia pseudotuberculosis serotype O:1b (strain IP 31758), this protein is Putative agmatine deiminase.